Here is a 1909-residue protein sequence, read N- to C-terminus: NFX1-type zinc finger-containing protein 1 (1909 aa).

Composition is skewed to basic and acidic residues over residues 1 to 12 and 76 to 107; these read MEDRRPHLEARP and RNQE…EGRS. Disordered regions lie at residues 1–133 and 787–813; these read MEDR…QPQQ and TQSA…EEEG. Polar residues predominate over residues 113–122; sequence SSDTFQQWHT. Over residues 802 to 813 the composition is skewed to acidic residues; that stretch reads EGEEEEEGEEEG. A coiled-coil region spans residues 939–964; the sequence is RRRILSYERQYRTWAERMAELRLQED. 4 consecutive NF-X1-type zinc fingers follow at residues 1291–1313, 1375–1393, 1433–1455, and 1463–1480; these read CGHV…QCMK, CGHR…LCSE, CGHP…RCQQ, and CSHK…PCQR. The stretch at 1733 to 1764 forms a coiled coil; the sequence is LAKKRLSFSSQELSDLQSEIQRLTYLVNLLMR. The RZ-type zinc-finger motif lies at 1818–1889; it reads ISDEERVQIV…LASEMDGAQH (72 aa). Residues cysteine 1840, histidine 1844, cysteine 1860, and cysteine 1863 each coordinate Zn(2+).

Belongs to the ZNFX1 family. As to quaternary structure, interacts with MAVS.

It is found in the mitochondrion outer membrane. The protein resides in the cytoplasm. It localises to the stress granule. Its function is as follows. RNA-binding protein that initiates the antiviral response and is required to restrict the replication of RNA viruses. Acts as a double-stranded RNA (dsRNA) sensor that recognizes viral RNA and then interacts with MAVS to initiate the type I interferon response. Also required for immunity against some bacteria, such as mycobacteria. The chain is NFX1-type zinc finger-containing protein 1 from Mus musculus (Mouse).